Consider the following 297-residue polypeptide: MTDYRAGFVSFVGRPNVGKSTLTNALVGEKIAITSSKPQTTRRAIRGIMHRREGQLILVDTPGVHRPRTLLGERLNTLVESTLGDVDVIGFCVPADERIGPGDRFINERLDDYPRAKKVAIVTKIDSARKTQVAEQLLAVSALREWEAIVPVSAVNSIQLDTLTTELMRLLPVSPGPLYPDESVTDEGVEDRIAEYIREAVLDGVEDELPHSLAVTIDDLVERDDKDLLEIYANLFVERDSQKAIVIGKGGSRIREVGATAREPIEALLGRHVFLSIRVKVAKDWQRDPKQLGRLGF.

The Era-type G domain occupies 5–173 (RAGFVSFVGR…TTELMRLLPV (169 aa)). The segment at 13-20 (GRPNVGKS) is G1. 13-20 (GRPNVGKS) is a GTP binding site. Residues 39–43 (QTTRR) are G2. The segment at 60-63 (DTPG) is G3. Residues 60–64 (DTPGV) and 123–126 (TKID) each bind GTP. The G4 stretch occupies residues 123–126 (TKID). The tract at residues 152–154 (VSA) is G5. The region spanning 205 to 283 (VEDELPHSLA…FLSIRVKVAK (79 aa)) is the KH type-2 domain.

This sequence belongs to the TRAFAC class TrmE-Era-EngA-EngB-Septin-like GTPase superfamily. Era GTPase family. As to quaternary structure, monomer.

It localises to the cytoplasm. Its subcellular location is the cell membrane. An essential GTPase that binds both GDP and GTP, with rapid nucleotide exchange. Plays a role in 16S rRNA processing and 30S ribosomal subunit biogenesis and possibly also in cell cycle regulation and energy metabolism. This chain is GTPase Era, found in Leifsonia xyli subsp. xyli (strain CTCB07).